Here is a 98-residue protein sequence, read N- to C-terminus: NADH-ubiquinone oxidoreductase chain 4L (98 aa).

3 helical membrane-spanning segments follow: residues 1–21 (MSMV…GLLV), 29–49 (SLLC…MAIL), and 61–81 (IILL…LVMV).

This sequence belongs to the complex I subunit 4L family. In terms of assembly, core subunit of respiratory chain NADH dehydrogenase (Complex I) which is composed of 45 different subunits.

Its subcellular location is the mitochondrion inner membrane. The enzyme catalyses a ubiquinone + NADH + 5 H(+)(in) = a ubiquinol + NAD(+) + 4 H(+)(out). In terms of biological role, core subunit of the mitochondrial membrane respiratory chain NADH dehydrogenase (Complex I) which catalyzes electron transfer from NADH through the respiratory chain, using ubiquinone as an electron acceptor. Part of the enzyme membrane arm which is embedded in the lipid bilayer and involved in proton translocation. The sequence is that of NADH-ubiquinone oxidoreductase chain 4L (MT-ND4L) from Lynx canadensis (Canada lynx).